Here is a 407-residue protein sequence, read N- to C-terminus: uncharacterized protein (407 aa).

The stretch at 10 to 37 forms a coiled coil; the sequence is DKLEQLANDVVTELTDMENKYKDLHVEL.

This is an uncharacterized protein from Bacillus subtilis (strain 168).